A 237-amino-acid polypeptide reads, in one-letter code: Sugar fermentation stimulation protein homolog (237 aa).

This sequence belongs to the SfsA family.

This is Sugar fermentation stimulation protein homolog from Pseudomonas savastanoi pv. phaseolicola (strain 1448A / Race 6) (Pseudomonas syringae pv. phaseolicola (strain 1448A / Race 6)).